A 304-amino-acid polypeptide reads, in one-letter code: Phosphatidylinositol mannoside acyltransferase (304 aa).

Catalysis depends on histidine 126, which acts as the Proton acceptor. Histidine 126 and arginine 164 together coordinate hexadecanoyl-CoA. Glutamate 200 is an active-site residue. Serine 206 and glutamate 229 together coordinate hexadecanoyl-CoA.

The protein belongs to the LpxL/LpxM/LpxP family. Monomer.

Its subcellular location is the cell inner membrane. It catalyses the reaction a 2,6-O-bis(alpha-D-mannopyranosyl)-1-phosphatidyl-1D-myo-inositol + an acyl-CoA = a 2-O-(alpha-D-mannosyl)-6-O-(6-O-acyl-alpha-D-mannosyl)-1-phosphatidyl-1D-myo-inositol + CoA. The catalysed reaction is a 1,2-diacyl-sn-glycero-3-phospho-[alpha-D-mannopyranosyl-(1&lt;-&gt;6)-D-myo-inositol] + an acyl-CoA = a 1,2-diacyl-sn-glycero-3-phospho-[alpha-D-6-acyl-mannopyranosyl-(1&lt;-&gt;6)-D-myo-inositol] + CoA. Its pathway is phospholipid metabolism; phosphatidylinositol metabolism. In terms of biological role, catalyzes the transfer of a palmitoyl moiety from palmitoyl-CoA to the 6-position of the mannose ring linked to the 2-position of myo-inositol in phosphatidyl-myo-inositol monomannoside (PIM1) or dimannoside (PIM2). The polypeptide is Phosphatidylinositol mannoside acyltransferase (Mycolicibacterium smegmatis (strain ATCC 700084 / mc(2)155) (Mycobacterium smegmatis)).